The chain runs to 333 residues: DNA-directed RNA polymerase subunit alpha (333 aa).

The segment at 1 to 234 (MQISVNEFLT…QQLAAFVDLK (234 aa)) is alpha N-terminal domain (alpha-NTD). Residues 248–333 (IDPILLRPVD…SLKKDDKATA (86 aa)) are alpha C-terminal domain (alpha-CTD).

The protein belongs to the RNA polymerase alpha chain family. In terms of assembly, homodimer. The RNAP catalytic core consists of 2 alpha, 1 beta, 1 beta' and 1 omega subunit. When a sigma factor is associated with the core the holoenzyme is formed, which can initiate transcription.

It catalyses the reaction RNA(n) + a ribonucleoside 5'-triphosphate = RNA(n+1) + diphosphate. Functionally, DNA-dependent RNA polymerase catalyzes the transcription of DNA into RNA using the four ribonucleoside triphosphates as substrates. This chain is DNA-directed RNA polymerase subunit alpha, found in Pseudomonas syringae pv. tomato (strain ATCC BAA-871 / DC3000).